Here is a 275-residue protein sequence, read N- to C-terminus: 4-hydroxy-3-methylbut-2-enyl diphosphate reductase (275 aa).

[4Fe-4S] cluster is bound at residue Cys12. (2E)-4-hydroxy-3-methylbut-2-enyl diphosphate-binding residues include His40 and His70. 2 residues coordinate dimethylallyl diphosphate: His40 and His70. Residues His40 and His70 each contribute to the isopentenyl diphosphate site. [4Fe-4S] cluster is bound at residue Cys92. (2E)-4-hydroxy-3-methylbut-2-enyl diphosphate is bound at residue His119. His119 is a binding site for dimethylallyl diphosphate. His119 lines the isopentenyl diphosphate pocket. The active-site Proton donor is the Glu121. A (2E)-4-hydroxy-3-methylbut-2-enyl diphosphate-binding site is contributed by Thr151. Cys181 is a [4Fe-4S] cluster binding site. The (2E)-4-hydroxy-3-methylbut-2-enyl diphosphate site is built by Ser209, Ser210, Asn211, and Ser251. 4 residues coordinate dimethylallyl diphosphate: Ser209, Ser210, Asn211, and Ser251. Isopentenyl diphosphate-binding residues include Ser209, Ser210, Asn211, and Ser251.

Belongs to the IspH family. Requires [4Fe-4S] cluster as cofactor.

It carries out the reaction isopentenyl diphosphate + 2 oxidized [2Fe-2S]-[ferredoxin] + H2O = (2E)-4-hydroxy-3-methylbut-2-enyl diphosphate + 2 reduced [2Fe-2S]-[ferredoxin] + 2 H(+). The enzyme catalyses dimethylallyl diphosphate + 2 oxidized [2Fe-2S]-[ferredoxin] + H2O = (2E)-4-hydroxy-3-methylbut-2-enyl diphosphate + 2 reduced [2Fe-2S]-[ferredoxin] + 2 H(+). The protein operates within isoprenoid biosynthesis; dimethylallyl diphosphate biosynthesis; dimethylallyl diphosphate from (2E)-4-hydroxy-3-methylbutenyl diphosphate: step 1/1. It participates in isoprenoid biosynthesis; isopentenyl diphosphate biosynthesis via DXP pathway; isopentenyl diphosphate from 1-deoxy-D-xylulose 5-phosphate: step 6/6. Catalyzes the conversion of 1-hydroxy-2-methyl-2-(E)-butenyl 4-diphosphate (HMBPP) into a mixture of isopentenyl diphosphate (IPP) and dimethylallyl diphosphate (DMAPP). Acts in the terminal step of the DOXP/MEP pathway for isoprenoid precursor biosynthesis. The sequence is that of 4-hydroxy-3-methylbut-2-enyl diphosphate reductase from Thermotoga petrophila (strain ATCC BAA-488 / DSM 13995 / JCM 10881 / RKU-1).